Reading from the N-terminus, the 78-residue chain is Pigment-dispersing hormone 1 peptides (78 aa).

A signal peptide spans Met1 to Gly22. Ala75 carries the post-translational modification Alanine amide.

Belongs to the arthropod PDH family. As to expression, eyestalk sinus gland.

The protein resides in the secreted. In terms of biological role, the pigment-dispersing hormone causes the migration of the distal retinal pigment into the proximal end of the pigment chromatophore cells and thus decreases the amount of light entering the retinulas. May also function as a neurotransmitter and/or neuromodulator. This Callinectes sapidus (Blue crab) protein is Pigment-dispersing hormone 1 peptides (PDH1).